Consider the following 439-residue polypeptide: Secreted aspartic protease FUS4 (439 aa).

The N-terminal stretch at Met-1 to Ala-22 is a signal peptide. Positions Tyr-49–Ala-434 constitute a Peptidase A1 domain. Asn-52 and Asn-61 each carry an N-linked (GlcNAc...) asparagine glycan. Residue Asp-67 is part of the active site. N-linked (GlcNAc...) asparagine glycosylation is found at Asn-101, Asn-107, and Asn-123. Residue Asp-296 is part of the active site. Cys-352 and Cys-390 form a disulfide bridge.

This sequence belongs to the peptidase A1 family.

The protein resides in the secreted. In terms of biological role, secreted aspartic protease; part of the gene cluster that mediates the biosynthesis of the mycotoxin fusarin C. Within the cluster, FUS1, FUS2, FUS8 and FUS9 are sufficient for fusarin production. The other FUS cluster members are not essential for fusarin C biosynthesis. The polypeptide is Secreted aspartic protease FUS4 (Gibberella moniliformis (strain M3125 / FGSC 7600) (Maize ear and stalk rot fungus)).